The primary structure comprises 222 residues: Superoxide dismutase [Mn], mitochondrial (222 aa).

A mitochondrion-targeting transit peptide spans M1–H24. H50 provides a ligand contact to Mn(2+). Y58 carries the 3'-nitrotyrosine modification. An N6-acetyllysine; alternate mark is found at K68 and K75. 2 positions are modified to N6-succinyllysine; alternate: K68 and K75. Residue H98 participates in Mn(2+) binding. K114 is subject to N6-acetyllysine. An N6-acetyllysine; alternate mark is found at K122 and K130. K122 and K130 each carry N6-succinyllysine; alternate. Mn(2+) contacts are provided by D183 and H187. At K202 the chain carries N6-acetyllysine.

Belongs to the iron/manganese superoxide dismutase family. In terms of assembly, homotetramer. The cofactor is Mn(2+). Nitrated under oxidative stress. Nitration coupled with oxidation inhibits the catalytic activity. Post-translationally, acetylation at Lys-122 decreases enzymatic activity. Deacetylated by SIRT3 upon exposure to ionizing radiations or after long fasting. In terms of processing, polyubiquitinated; leading to proteasomal degradation. Deubiquitinated by USP36 which increases protein stability.

It localises to the mitochondrion matrix. The enzyme catalyses 2 superoxide + 2 H(+) = H2O2 + O2. Functionally, destroys superoxide anion radicals which are normally produced within the cells and which are toxic to biological systems. This chain is Superoxide dismutase [Mn], mitochondrial (Sod2), found in Rattus norvegicus (Rat).